The sequence spans 250 residues: 5'-nucleotidase SurE (250 aa).

Residues Asp8, Asp9, Ser39, and Asn95 each contribute to the a divalent metal cation site.

Belongs to the SurE nucleotidase family. A divalent metal cation serves as cofactor.

Its subcellular location is the cytoplasm. The enzyme catalyses a ribonucleoside 5'-phosphate + H2O = a ribonucleoside + phosphate. Nucleotidase that shows phosphatase activity on nucleoside 5'-monophosphates. The sequence is that of 5'-nucleotidase SurE from Cupriavidus pinatubonensis (strain JMP 134 / LMG 1197) (Cupriavidus necator (strain JMP 134)).